The chain runs to 539 residues: M protein, serotype 24 (539 aa).

An N-terminal signal peptide occupies residues 1-42 (MTKNNTNRHYSLRKLKTGTASVAVALTVLGAGLVVNTNEVSA). The A-1 repeat unit spans residues 118–152 (LEARKADLEKALEGAMNFSTADSAKIKTLEAEKAA). Residues 118–301 (LEARKADLEK…ALEAEKADLE (184 aa)) form a 5.3 X 35 AA tandem repeats, A-type region. The stretch at 153 to 187 (LAARKADLEKALEGAMNFSTADSAKIKTLEAEKAA) is one A-2 repeat. An A-3 repeat occupies 188–222 (LEARQAELEKALEGAMNFSTADSAKIKTLEAEKAA). The A-4 repeat unit spans residues 223-257 (LAARKADLEKALEGAMNFSTADSAKIKTLEAEKAA). An A-5 repeat occupies 258-292 (LEARQAELEKALEGAMNFSTADSAKIKTLEAEKAA). One copy of the A-6; truncated repeat lies at 293–297 (LEAEK). Residues 297-401 (KADLEHQSQV…REAKKQVEKA (105 aa)) form a disordered region. C repeat units follow at residues 298-332 (ADLE…EAEH), 333-367 (QKLE…EAEH), and 368-402 (QKLE…EKAL). Residues 303–312 (QSQVLNANRQ) are compositionally biased toward polar residues. 3 stretches are compositionally biased toward basic and acidic residues: residues 314 to 340 (LRRD…EQNK), 349 to 375 (LRRD…EQNK), and 384 to 401 (LRRD…VEKA). D repeat units lie at residues 435–440 (AKLEAE), 441–446 (AKALKE), 449–454 (AKQAEE), and 456–461 (AKLRAG). Residues 456-511 (AKLRAGKASDSQTPDAKPGNKAVPGKGQAPQAGTKPNQNKAPMKETKRQLPSTGET) are disordered. Residues 505–509 (LPSTG) carry the LPXTG sorting signal motif. Thr508 is modified (pentaglycyl murein peptidoglycan amidated threonine). The propeptide at 509–539 (GETANPFFTAAALTVMATAGVAAVVKRKEEN) is removed by sortase.

This sequence belongs to the M protein family.

Its subcellular location is the secreted. It is found in the cell wall. This protein is one of the different antigenic serotypes of protein M. Protein M is closely associated with virulence of the bacterium and can render the organism resistant to phagocytosis. In Streptococcus pyogenes, this protein is M protein, serotype 24 (emm24).